The chain runs to 60 residues: UPF0337 protein SSP1134 (60 aa).

Residues 1-41 (MADENKFEQAKGNVKETVGNVTDNKELENEGKEDKTSGKAK) are disordered. Residues 23 to 41 (DNKELENEGKEDKTSGKAK) are compositionally biased toward basic and acidic residues.

This sequence belongs to the UPF0337 (CsbD) family.

This is UPF0337 protein SSP1134 from Staphylococcus saprophyticus subsp. saprophyticus (strain ATCC 15305 / DSM 20229 / NCIMB 8711 / NCTC 7292 / S-41).